Consider the following 321-residue polypeptide: 2,3,4,5-tetrahydropyridine-2,6-dicarboxylate N-succinyltransferase (321 aa).

The Mg(2+) site is built by Asp-166 and Glu-183. Glu-199 (acyl-anhydride intermediate) is an active-site residue. Succinyl-CoA contacts are provided by residues Arg-201, Gly-216, Ser-219, Ala-242, 257–258 (EA), Gly-265, Lys-281, and 294–297 (RRNS).

Belongs to the type 2 tetrahydrodipicolinate N-succinyltransferase family. Homotrimer.

The protein resides in the cytoplasm. The enzyme catalyses (S)-2,3,4,5-tetrahydrodipicolinate + succinyl-CoA + H2O = (S)-2-succinylamino-6-oxoheptanedioate + CoA. It functions in the pathway amino-acid biosynthesis; L-lysine biosynthesis via DAP pathway; LL-2,6-diaminopimelate from (S)-tetrahydrodipicolinate (succinylase route): step 1/3. Functionally, catalyzes the conversion of the cyclic tetrahydrodipicolinate (THDP) into the acyclic N-succinyl-L-2-amino-6-oxopimelate using succinyl-CoA. The sequence is that of 2,3,4,5-tetrahydropyridine-2,6-dicarboxylate N-succinyltransferase from Rothia mucilaginosa (strain DY-18) (Stomatococcus mucilaginosus).